An 838-amino-acid chain; its full sequence is Probable beta-glucosidase K (838 aa).

Asn19 carries N-linked (GlcNAc...) asparagine glycosylation. The active site involves Asp232. 2 N-linked (GlcNAc...) asparagine glycosylation sites follow: Asn324 and Asn489. The PA14 domain occupies 405-564; it reads EGQPGLRMRF…DPELAIARAV (160 aa).

The protein belongs to the glycosyl hydrolase 3 family.

Its subcellular location is the secreted. It carries out the reaction Hydrolysis of terminal, non-reducing beta-D-glucosyl residues with release of beta-D-glucose.. The protein operates within glycan metabolism; cellulose degradation. Functionally, beta-glucosidases are one of a number of cellulolytic enzymes involved in the degradation of cellulosic biomass. Catalyzes the last step releasing glucose from the inhibitory cellobiose. This is Probable beta-glucosidase K (bglK) from Emericella nidulans (strain FGSC A4 / ATCC 38163 / CBS 112.46 / NRRL 194 / M139) (Aspergillus nidulans).